Reading from the N-terminus, the 300-residue chain is MLAFIRFLFAGLLLVISHAFAATVQDEHGTFTLEKTPQRIVVLELSFADALAAVDVIPIGIADDNDAKRILPEVRAHLKPWQSVGTRAQPSLEAIAALKPDLIIADSSRHAGVYIALQQIAPVLLLKSRNETYAENLQSAAIIGEMVGKKREMQARLEQHKERMAQWASQLPKGTRVAFGTSREQQFNLHTQETWTGSVLASLGLNVPAAMAGASMPSIGLEQLLAVNPAWLLVAHYREESIVKRWQQDPLWQMLTAAQKQQVASVDSNTWARMRGIFAAERIAADTVKIFHHQPLTVVK.

The signal sequence occupies residues 1 to 21 (MLAFIRFLFAGLLLVISHAFA). One can recognise a Fe/B12 periplasmic-binding domain in the interval 39–295 (RIVVLELSFA…DTVKIFHHQP (257 aa)).

This sequence belongs to the bacterial solute-binding protein 8 family. The complex is composed of two ATP-binding proteins (FecE), two transmembrane proteins (FecC and FecD) and a solute-binding protein (FecB). Interacts with FecC and FecD.

It localises to the periplasm. In terms of biological role, part of the ABC transporter complex FecBCDE involved in citrate-dependent Fe(3+) uptake. Binds both iron-free and iron-loaded citrate although it binds iron-loaded citrate with a higher affinity. Binds different forms of Fe(3+)-citrate as well as citrate complexed with various representative Fe(3+)-mimics (Ga(3+), Al(3+), Sc(3+) and In(3+)) and a representative divalent metal ion (Mg(2+)). Can also bind various tricarboxylates in iron-free and iron-loaded form. In Escherichia coli (strain K12), this protein is Fe(3+) dicitrate-binding periplasmic protein FecB.